Reading from the N-terminus, the 393-residue chain is Nucleoside permease NupC (393 aa).

A run of 9 helical transmembrane segments spans residues 3-23 (YLIGIIGLIVFLGLAWIASSG), 32-52 (IVVMLILQFILGYILLNTGIG), 87-107 (TTFFMNVLLPIVFISALIGIL), 168-188 (LCASAMSTVSMSIVGAYMTML), 191-211 (EYVVTALVLNLFGGFIIASII), 249-269 (VVVAAMLIGFVAIIALINGIF), 272-292 (VFGISFQGILGYVFAPFAFLV), 334-354 (AIVSVFLVSFANFSSIGIIAG), and 372-392 (LKLLYGATLVSFLSAAIVGLI).

This sequence belongs to the concentrative nucleoside transporter (CNT) (TC 2.A.41) family.

Its subcellular location is the cell membrane. Functionally, transport of the pyrimidine nucleoside uridine. The sequence is that of Nucleoside permease NupC from Bacillus subtilis (strain 168).